Reading from the N-terminus, the 153-residue chain is D-erythrulose-4-phosphate isomerase 1 (153 aa).

Catalysis depends on Cys69, which acts as the Proton acceptor.

This sequence belongs to the LacAB/RpiB family.

The enzyme catalyses D-erythrulose 4-phosphate = D-erythrose 4-phosphate. The protein operates within carbohydrate metabolism; erythritol degradation. Its pathway is carbohydrate metabolism; D-threitol degradation. Catalyzes the isomerization of D-erythrulose-4P to D-erythrose-4P. Involved in the degradation pathways of erythritol and D-threitol, that allow M.smegmatis to grow on these compounds as the sole carbon source. The polypeptide is D-erythrulose-4-phosphate isomerase 1 (Mycolicibacterium smegmatis (strain ATCC 700084 / mc(2)155) (Mycobacterium smegmatis)).